The following is a 249-amino-acid chain: Probable septum site-determining protein MinC (249 aa).

The tract at residues 117–138 (AVRPPQPPPPPHARAEPAAPVA) is disordered.

Belongs to the MinC family. As to quaternary structure, interacts with MinD and FtsZ.

In terms of biological role, cell division inhibitor that blocks the formation of polar Z ring septums. Rapidly oscillates between the poles of the cell to destabilize FtsZ filaments that have formed before they mature into polar Z rings. Prevents FtsZ polymerization. This chain is Probable septum site-determining protein MinC, found in Xanthomonas campestris pv. campestris (strain 8004).